We begin with the raw amino-acid sequence, 396 residues long: Succinyl-diaminopimelate desuccinylase (396 aa).

Residue H74 coordinates Zn(2+). D76 is an active-site residue. Zn(2+) is bound at residue D107. The active-site Proton acceptor is the E142. E143, E171, and H360 together coordinate Zn(2+).

This sequence belongs to the peptidase M20A family. DapE subfamily. In terms of assembly, homodimer. It depends on Zn(2+) as a cofactor. The cofactor is Co(2+).

It catalyses the reaction N-succinyl-(2S,6S)-2,6-diaminopimelate + H2O = (2S,6S)-2,6-diaminopimelate + succinate. The protein operates within amino-acid biosynthesis; L-lysine biosynthesis via DAP pathway; LL-2,6-diaminopimelate from (S)-tetrahydrodipicolinate (succinylase route): step 3/3. Catalyzes the hydrolysis of N-succinyl-L,L-diaminopimelic acid (SDAP), forming succinate and LL-2,6-diaminopimelate (DAP), an intermediate involved in the bacterial biosynthesis of lysine and meso-diaminopimelic acid, an essential component of bacterial cell walls. This is Succinyl-diaminopimelate desuccinylase from Methylobacterium sp. (strain 4-46).